A 425-amino-acid chain; its full sequence is MAEIMHVFAREILDSRGNPTVEAEVFLDDGSHGVAGVPSGASTGVHEAHELRDGGDRYLGKGVLKAVENVNEEIGDELAGLEADDQRLIDEAMIKLDGTANKSRLGANAILGVSMAVAKAAADSAGLPLFRYIGGPNAHVLPVPMMNIINGGAHADSGVDVQEFMIAPIGAETFSEALRNGAEVYHALKSVIKEKGLSTGLGDEGGFAPSVGSTREALDLIVEAIEKAGFTPGKDIALALDVASSEFFKDGTYHFEGGQHSAAEMANVYAELVDAYPIVSIEDPLQEDDWEGYTNLTATIGDKVQIVGDDFFVTNPERLKEGIAKKAANSILVKVNQIGTLTETFDAVDMAHRAGYTSMMSHRSGETEDTTIADLAVALNCGQIKTGAPARSDRVAKYNQLLRIEQLLGDAGVYAGRSAFPRFQG.

Glutamine 162 is a (2R)-2-phosphoglycerate binding site. Glutamate 204 (proton donor) is an active-site residue. Residues aspartate 241, glutamate 282, and aspartate 309 each coordinate Mg(2+). Residues lysine 334, arginine 363, serine 364, and lysine 385 each coordinate (2R)-2-phosphoglycerate. Lysine 334 acts as the Proton acceptor in catalysis.

It belongs to the enolase family. Mg(2+) is required as a cofactor.

It is found in the cytoplasm. The protein resides in the secreted. The protein localises to the cell surface. It carries out the reaction (2R)-2-phosphoglycerate = phosphoenolpyruvate + H2O. It participates in carbohydrate degradation; glycolysis; pyruvate from D-glyceraldehyde 3-phosphate: step 4/5. Its function is as follows. Catalyzes the reversible conversion of 2-phosphoglycerate (2-PG) into phosphoenolpyruvate (PEP). It is essential for the degradation of carbohydrates via glycolysis. The sequence is that of Enolase from Corynebacterium glutamicum (strain R).